A 243-amino-acid chain; its full sequence is Small ribosomal subunit protein uS3 (243 aa).

Ala-2 is modified (N-acetylalanine). Ser-6 is modified (phosphoserine; by PKC/PRKCD). A KH type-2 domain is found at 21-92 (LNEFLTRELA…SVELYAEKVA (72 aa)). At Ser-35 the chain carries Phosphoserine. Thr-42 carries the post-translational modification Phosphothreonine; by MAPK. The residue at position 62 (Lys-62) is an N6-acetyllysine. Asymmetric dimethylarginine; by PRMT1 is present on residues Arg-64, Arg-65, and Arg-67. Thr-70 bears the Phosphothreonine; by PKB mark. Lys-90 participates in a covalent cross-link: Glycyl lysine isopeptide (Lys-Gly) (interchain with G-Cter in ubiquitin). Phosphoserine is present on Ser-104. Lys-132 carries the N6-succinyllysine modification. Residue Lys-202 forms a Glycyl lysine isopeptide (Lys-Gly) (interchain with G-Cter in ubiquitin) linkage. Ser-209 is subject to Phosphoserine; by IKKB. A Glycyl lysine isopeptide (Lys-Gly) (interchain with G-Cter in SUMO2); alternate cross-link involves residue Lys-214. A Glycyl lysine isopeptide (Lys-Gly) (interchain with G-Cter in ubiquitin); alternate cross-link involves residue Lys-214. Residues 214-243 (KDEILPTTPISEQKGGKPEPPAMPQPVPTA) form a disordered region. The residue at position 220 (Thr-220) is a Phosphothreonine. Thr-221 bears the Phosphothreonine; by CDK1 and PKC/PRKCD mark. Ser-224 bears the Phosphoserine mark. Residue Lys-230 forms a Glycyl lysine isopeptide (Lys-Gly) (interchain with G-Cter in SUMO2) linkage. A compositionally biased stretch (pro residues) spans 231–243 (PEPPAMPQPVPTA). The residue at position 242 (Thr-242) is a Phosphothreonine.

The protein belongs to the universal ribosomal protein uS3 family. Component of the 40S small ribosomal subunit. Identified in a IGF2BP1-dependent mRNP granule complex containing untranslated mRNAs. Interacts with HNRPD. Interacts with PRMT1; the interaction methylates RPS3. Interacts with SUMO1; the interaction sumoylates RPS3. Interacts with UBC9. Interacts with CDK1; the interaction phosphorylates RPS3. Interacts with PRKCD; the interaction phosphorylates RPS3. Interacts with PKB/AKT; the interaction phosphorylates RPS3. Interacts with E2F1; the interaction occurs in the absence of nerve growth factor and increases transcription of pro-apoptotic proteins BCL2L11/BIM and HRK/Dp5. Interacts with the base excision repair proteins APEX1 and OGG1; interaction with OGG1 increases OGG1 N-glycosylase activity. Interacts with UNG; the interaction increases the uracil excision activity of UNG1. Interacts with HSP90; the interaction prevents the ubiquitination and proteasome-dependent degradation of RPS3 and is suppressed by increased ROS levels. Interacts with TOM70; the interaction promotes translocation of RPS3 to the mitochondrion. Interacts (via N-terminus) with RELA (via N-terminus); the interaction enhances the DNA-binding activity of the NF-kappa-B p65-p50 complex. Interacts with NFKBIA; the interaction is direct and may bridge the interaction between RPS3 and RELA. Interacts with IKKB; the interaction phosphorylates RPS3 and enhances its translocation to the nucleus. Interacts (via KH domain) with MDM2 and TP53. Interacts with TRADD. Interacts with CRY1. Methylation by PRMT1 is required for import into the nucleolus and for ribosome assembly. In terms of processing, sumoylation by SUMO1 enhances protein stability through increased resistance to proteolysis. Sumoylation occurs at one or more of the three consensus sites, Lys-18, Lys-214 and Lys-230. Post-translationally, phosphorylation at Thr-221 by CDK1 occurs mainly in G2/M phase. Phosphorylation by PRKCD occurs on a non-ribosomal-associated form which results in translocation of RPS3 to the nucleus and enhances its endonuclease activity. Phosphorylated on Ser-209 by IKKB in response to activation of the NF-kappa-B p65-p50 complex which enhances the association of RPS3 with importin-alpha and mediates the nuclear translocation of RPS3. Phosphorylation by MAPK is required for translocation to the nucleus following exposure of cells to DNA damaging agents such as hydrogen peroxide. Phosphorylation by PKB/AKT mediates RPS3 nuclear translocation, enhances RPS3 endonuclease activity and suppresses RPS3-induced neuronal apoptosis. Ubiquitinated; ubiquitination is prevented by interaction with HSP90 which stabilizes the protein. Monoubiquitinated at Lys-214 by RNF10 and ZNF598 when a ribosome has stalled during translation of poly(A) sequences, leading to preclude synthesis of a long poly-lysine tail and initiate the ribosome quality control (RQC) pathway to degrade the potentially detrimental aberrant nascent polypeptide. Deubiquitinated at Lys-214 by USP10, preventing degradation by the proteasome and promoting 40S ribosome subunit recycling following ribosome dissociation. In terms of processing, ufmylated by UFL1.

Its subcellular location is the cytoplasm. It is found in the nucleus. It localises to the nucleolus. The protein resides in the mitochondrion inner membrane. The protein localises to the cytoskeleton. Its subcellular location is the spindle. The enzyme catalyses 2'-deoxyribonucleotide-(2'-deoxyribose 5'-phosphate)-2'-deoxyribonucleotide-DNA = a 3'-end 2'-deoxyribonucleotide-(2,3-dehydro-2,3-deoxyribose 5'-phosphate)-DNA + a 5'-end 5'-phospho-2'-deoxyribonucleoside-DNA + H(+). In terms of biological role, component of the small ribosomal subunit. The ribosome is a large ribonucleoprotein complex responsible for the synthesis of proteins in the cell. Has endonuclease activity and plays a role in repair of damaged DNA. Cleaves phosphodiester bonds of DNAs containing altered bases with broad specificity and cleaves supercoiled DNA more efficiently than relaxed DNA. Displays high binding affinity for 7,8-dihydro-8-oxoguanine (8-oxoG), a common DNA lesion caused by reactive oxygen species (ROS). Has also been shown to bind with similar affinity to intact and damaged DNA. Stimulates the N-glycosylase activity of the base excision protein OGG1. Enhances the uracil excision activity of UNG1. Also stimulates the cleavage of the phosphodiester backbone by APEX1. When located in the mitochondrion, reduces cellular ROS levels and mitochondrial DNA damage. Has also been shown to negatively regulate DNA repair in cells exposed to hydrogen peroxide. Plays a role in regulating transcription as part of the NF-kappa-B p65-p50 complex where it binds to the RELA/p65 subunit, enhances binding of the complex to DNA and promotes transcription of target genes. Represses its own translation by binding to its cognate mRNA. Binds to and protects TP53/p53 from MDM2-mediated ubiquitination. Involved in spindle formation and chromosome movement during mitosis by regulating microtubule polymerization. Involved in induction of apoptosis through its role in activation of CASP8. Induces neuronal apoptosis by interacting with the E2F1 transcription factor and acting synergistically with it to up-regulate pro-apoptotic proteins BCL2L11/BIM and HRK/Dp5. Interacts with TRADD following exposure to UV radiation and induces apoptosis by caspase-dependent JNK activation. The sequence is that of Small ribosomal subunit protein uS3 (RPS3) from Bos taurus (Bovine).